Consider the following 229-residue polypeptide: Multiple organellar RNA editing factor 5, chloroplastic/mitochondrial (229 aa).

The transit peptide at 1-57 (MAKTLARSTASRITKRLISTSGATTPSPSYILSRRSTPVFSHAVGFISSLNRFTTIR) directs the protein to the chloroplast and mitochondrion.

Belongs to the MORF family. As to quaternary structure, homodimer and heterodimers with MORF8/RIP1, MORF3/RIP3, MORF6/RIP6, MORF7/RIP7 and MORF9/RIP9.

Its subcellular location is the mitochondrion. The protein resides in the plastid. It is found in the chloroplast. Its function is as follows. Involved in organellar RNA editing. Required for the processing of few RNA editing sites in mitochondria. The chain is Multiple organellar RNA editing factor 5, chloroplastic/mitochondrial from Arabidopsis thaliana (Mouse-ear cress).